Consider the following 296-residue polypeptide: GTP-binding protein GEM (296 aa).

Disordered regions lie at residues 1-20 (MTLNNVTMRQGTVGMQPQQQ) and 37-68 (PHQYSHRNRHSATPEDHCRRSWSSDSTDSVIS). A compositionally biased stretch (low complexity) spans 57-68 (SWSSDSTDSVIS). GTP is bound by residues 82 to 89 (GEQGVGKS) and 191 to 194 (NKSD). Positions 266-285 (ARRFWGKIVAKNNKNMAFKL) are calmodulin-binding.

Belongs to the small GTPase superfamily. RGK family. As to quaternary structure, interacts with calmodulin in a Ca(2+)-dependent manner. Binds ROCK1. Post-translationally, phosphorylated on tyrosine residues.

It is found in the cell membrane. Functionally, could be a regulatory protein, possibly participating in receptor-mediated signal transduction at the plasma membrane. Has guanine nucleotide-binding activity but undetectable intrinsic GTPase activity. This Pongo abelii (Sumatran orangutan) protein is GTP-binding protein GEM (GEM).